The chain runs to 644 residues: 3D-(3,5/4)-trihydroxycyclohexane-1,2-dione hydrolase 2 (644 aa).

Position 65 (Glu-65) interacts with thiamine diphosphate. A thiamine pyrophosphate binding region spans residues 442 to 522 (SLPGDLQRMW…INVLLFDNSG (81 aa)). Residues Asp-493 and Asn-520 each contribute to the Mg(2+) site.

It belongs to the TPP enzyme family. Mg(2+) is required as a cofactor. It depends on thiamine diphosphate as a cofactor.

The catalysed reaction is 3D-3,5/4-trihydroxycyclohexane-1,2-dione + H2O = 5-deoxy-D-glucuronate + H(+). It participates in polyol metabolism; myo-inositol degradation into acetyl-CoA; acetyl-CoA from myo-inositol: step 3/7. In terms of biological role, involved in the cleavage of the C1-C2 bond of 3D-(3,5/4)-trihydroxycyclohexane-1,2-dione (THcHDO) to yield 5-deoxy-glucuronate (5DG). This chain is 3D-(3,5/4)-trihydroxycyclohexane-1,2-dione hydrolase 2, found in Bacillus cereus (strain ZK / E33L).